A 261-amino-acid chain; its full sequence is Indole-3-glycerol phosphate synthase (261 aa).

Belongs to the TrpC family.

The catalysed reaction is 1-(2-carboxyphenylamino)-1-deoxy-D-ribulose 5-phosphate + H(+) = (1S,2R)-1-C-(indol-3-yl)glycerol 3-phosphate + CO2 + H2O. The protein operates within amino-acid biosynthesis; L-tryptophan biosynthesis; L-tryptophan from chorismate: step 4/5. The polypeptide is Indole-3-glycerol phosphate synthase (Burkholderia vietnamiensis (strain G4 / LMG 22486) (Burkholderia cepacia (strain R1808))).